The primary structure comprises 148 residues: MTPESNLKSLGAKTPYIFEYNSDLLEAFPNPNPNLDPLITLECKEFTSLCPITSQPDFGVIFIRYIPKDKMVESKSLKLYLFSYRNHGSFHESCINTILLDLVQLLEPKYLEVYGDFVSRGGIAIKPFVNYAIKEYQDFKEKRLLDAK.

Cysteine 50 acts as the Thioimide intermediate in catalysis. Aspartate 57 functions as the Proton donor in the catalytic mechanism. Substrate is bound by residues 72-74 and 91-92; these read VES and HE.

It belongs to the GTP cyclohydrolase I family. QueF type 1 subfamily.

It localises to the cytoplasm. The enzyme catalyses 7-aminomethyl-7-carbaguanine + 2 NADP(+) = 7-cyano-7-deazaguanine + 2 NADPH + 3 H(+). The protein operates within tRNA modification; tRNA-queuosine biosynthesis. In terms of biological role, catalyzes the NADPH-dependent reduction of 7-cyano-7-deazaguanine (preQ0) to 7-aminomethyl-7-deazaguanine (preQ1). The sequence is that of NADPH-dependent 7-cyano-7-deazaguanine reductase from Helicobacter pylori (strain J99 / ATCC 700824) (Campylobacter pylori J99).